We begin with the raw amino-acid sequence, 97 residues long: Cytochrome c oxidase subunit 4 isoform 1, mitochondrial (97 aa).

A mitochondrion-targeting transit peptide spans 1-22 (MLATRVFNLIGRRAISTSVCVR). K29 carries the post-translational modification N6-acetyllysine; alternate. At K29 the chain carries N6-succinyllysine; alternate. K53 carries the N6-acetyllysine modification. Phosphoserine is present on residues S56 and S58. N6-acetyllysine; alternate is present on K60. K60 is modified (N6-succinyllysine; alternate). The residue at position 67 (K67) is an N6-acetyllysine.

The protein belongs to the cytochrome c oxidase IV family. Component of the cytochrome c oxidase (complex IV, CIV), a multisubunit enzyme composed of 14 subunits. The complex is composed of a catalytic core of 3 subunits MT-CO1, MT-CO2 and MT-CO3, encoded in the mitochondrial DNA, and 11 supernumerary subunits COX4I, COX5A, COX5B, COX6A, COX6B, COX6C, COX7A, COX7B, COX7C, COX8 and NDUFA4, which are encoded in the nuclear genome. The complex exists as a monomer or a dimer and forms supercomplexes (SCs) in the inner mitochondrial membrane with NADH-ubiquinone oxidoreductase (complex I, CI) and ubiquinol-cytochrome c oxidoreductase (cytochrome b-c1 complex, complex III, CIII), resulting in different assemblies (supercomplex SCI(1)III(2)IV(1) and megacomplex MCI(2)III(2)IV(2)). Interacts with PHB2; the interaction decreases in absence of SPHK2. Interacts with AFG1L. Interacts with ABCB7; this interaction allows the regulation of cellular iron homeostasis and cellular reactive oxygen species (ROS) levels in cardiomyocytes. Interacts with FLVCR2; this interaction occurs in the absence of heme and is disrupted upon heme binding. Interacts with IRGC.

It localises to the mitochondrion inner membrane. The protein operates within energy metabolism; oxidative phosphorylation. Functionally, component of the cytochrome c oxidase, the last enzyme in the mitochondrial electron transport chain which drives oxidative phosphorylation. The respiratory chain contains 3 multisubunit complexes succinate dehydrogenase (complex II, CII), ubiquinol-cytochrome c oxidoreductase (cytochrome b-c1 complex, complex III, CIII) and cytochrome c oxidase (complex IV, CIV), that cooperate to transfer electrons derived from NADH and succinate to molecular oxygen, creating an electrochemical gradient over the inner membrane that drives transmembrane transport and the ATP synthase. Cytochrome c oxidase is the component of the respiratory chain that catalyzes the reduction of oxygen to water. Electrons originating from reduced cytochrome c in the intermembrane space (IMS) are transferred via the dinuclear copper A center (CU(A)) of subunit 2 and heme A of subunit 1 to the active site in subunit 1, a binuclear center (BNC) formed by heme A3 and copper B (CU(B)). The BNC reduces molecular oxygen to 2 water molecules using 4 electrons from cytochrome c in the IMS and 4 protons from the mitochondrial matrix. The chain is Cytochrome c oxidase subunit 4 isoform 1, mitochondrial (COX4I1) from Sus scrofa (Pig).